A 41-amino-acid polypeptide reads, in one-letter code: Diuretic hormone 1 (41 aa).

The residue at position 41 (Ile-41) is an Isoleucine amide.

It is found in the secreted. Its function is as follows. Regulation of fluid secretion. May stimulate primary urine secretion by Malpighian tubules and causes a dose-dependent stimulation of cAMP levels in the tubules. The polypeptide is Diuretic hormone 1 (Hyles lineata (White-lined sphinx moth)).